The sequence spans 537 residues: Chaperonin GroEL 3 (537 aa).

ATP contacts are provided by residues 30 to 33, 87 to 91, Gly414, 480 to 482, and Asp496; these read TLGP, DGTTT, and DAL.

This sequence belongs to the chaperonin (HSP60) family. In terms of assembly, forms a cylinder of 14 subunits composed of two heptameric rings stacked back-to-back. Interacts with the co-chaperonin GroES.

It is found in the cytoplasm. It catalyses the reaction ATP + H2O + a folded polypeptide = ADP + phosphate + an unfolded polypeptide.. In terms of biological role, together with its co-chaperonin GroES, plays an essential role in assisting protein folding. The GroEL-GroES system forms a nano-cage that allows encapsulation of the non-native substrate proteins and provides a physical environment optimized to promote and accelerate protein folding. This chain is Chaperonin GroEL 3, found in Acaryochloris marina (strain MBIC 11017).